The chain runs to 394 residues: Elongation factor Tu (394 aa).

Positions 10–204 (KPHVNVGTIG…ALDNYIPEPE (195 aa)) constitute a tr-type G domain. A G1 region spans residues 19–26 (GHVDHGKT). Residue 19–26 (GHVDHGKT) participates in GTP binding. Residue T26 coordinates Mg(2+). Positions 60–64 (GITIS) are G2. Residues 81–84 (DCPG) form a G3 region. GTP-binding positions include 81-85 (DCPGH) and 136-139 (NKCD). Residues 136–139 (NKCD) form a G4 region. Positions 174–176 (SAL) are G5.

Belongs to the TRAFAC class translation factor GTPase superfamily. Classic translation factor GTPase family. EF-Tu/EF-1A subfamily. As to quaternary structure, monomer.

Its subcellular location is the cytoplasm. The enzyme catalyses GTP + H2O = GDP + phosphate + H(+). GTP hydrolase that promotes the GTP-dependent binding of aminoacyl-tRNA to the A-site of ribosomes during protein biosynthesis. The chain is Elongation factor Tu from Idiomarina loihiensis (strain ATCC BAA-735 / DSM 15497 / L2-TR).